Here is a 259-residue protein sequence, read N- to C-terminus: Dickkopf-related protein 2 (259 aa).

The first 33 residues, 1–33, serve as a signal peptide directing secretion; that stretch reads MAALMRVKDSSRCLLLLAAVLMVESSQLGSSRA. Positions 42-70 are disordered; it reads LGGETPAQSANRSAGMNQGLAFGGSKKGK. The span at 47–57 shows a compositional bias: polar residues; sequence PAQSANRSAGM. N-linked (GlcNAc...) asparagine glycosylation is present at asparagine 52. The DKK-type Cys-1 stretch occupies residues 78 to 127; sequence CSSDKECEVGRYCHSPHQGSSACMLCRRKKKRCHRDGMCCPGTRCNNGIC. Disulfide bonds link cysteine 183–cysteine 195, cysteine 189–cysteine 204, cysteine 194–cysteine 231, cysteine 214–cysteine 239, and cysteine 233–cysteine 256. Positions 183–256 are DKK-type Cys-2; it reads CLRSSDCIDG…YSSKARLHVC (74 aa).

This sequence belongs to the dickkopf family. As to quaternary structure, interacts with LRP5 and LRP6. In terms of processing, may be proteolytically processed by a furin-like protease.

Its subcellular location is the secreted. Functionally, antagonizes canonical Wnt signaling by inhibiting LRP5/6 interaction with Wnt and by forming a ternary complex with the transmembrane protein KREMEN that promotes internalization of LRP5/6. DKKs play an important role in vertebrate development, where they locally inhibit Wnt regulated processes such as antero-posterior axial patterning, limb development, somitogenesis and eye formation. In the adult, Dkks are implicated in bone formation and bone disease, cancer and Alzheimer disease. This is Dickkopf-related protein 2 from Mus musculus (Mouse).